The chain runs to 355 residues: MTTNSSFFDEHIAMIYSNLMDQYMPEYFKSFEYTPWVFSLLGSVVIGLSGIFPLIIIPTEEKMAKEGYKDPADSKLLRVLLSFAVGGLLGDVFLHLLPEAWEGDNQDPSSHPSLRSGLWVLSGILIFTIVEKIFSGYASADEENPQPKCVEIANCLLRRHGGQLPEGETSESCGGACDIEDVGKVCFLREQEQKSKERKEQPKKVAGYLNLLANSIDNFTHGLAVAGSFLVSFRHGILATFAILLHEIPHEVGDFAILLRSGFSRWDAARAQLLTAGAGLLGALVAIGGSGVTSAMEARTSWIMPFTAGGFLHIALVTVLPDLLKEEERKESIKQLLALVFGIALMAVMTMLFEH.

The N-linked (GlcNAc...) asparagine glycan is linked to Asn-4. Transmembrane regions (helical) follow at residues 37 to 57, 79 to 99, and 118 to 138; these read VFSLLGSVVIGLSGIFPLIII, VLLSFAVGGLLGDVFLHLLPE, and LWVLSGILIFTIVEKIFSGYA. N-linked (GlcNAc...) asparagine glycosylation is present at Asn-218. 2 helical membrane passes run 273-293 and 301-321; these read LLTAGAGLLGALVAIGGSGVT and SWIMPFTAGGFLHIALVTVLP.

The protein belongs to the ZIP transporter (TC 2.A.5) family. KE4/Catsup subfamily.

It localises to the basolateral cell membrane. The protein resides in the golgi apparatus membrane. In terms of biological role, involved in zinc transport and homeostasis. The sequence is that of Zinc transporter ZIP13 homolog (Zip99C) from Drosophila melanogaster (Fruit fly).